Here is a 270-residue protein sequence, read N- to C-terminus: dTDP-6-deoxy-L-talose 4-dehydrogenase (NAD(+)) (270 aa).

NAD(+) is bound by residues 11 to 12 (YI), 50 to 51 (DI), 72 to 76 (LAWQA), asparagine 87, threonine 112, tyrosine 135, and lysine 139. Substrate-binding residues include threonine 112 and tyrosine 135. The active-site Proton acceptor is the tyrosine 135.

It belongs to the NAD(P)-dependent epimerase/dehydratase family.

The catalysed reaction is dTDP-6-deoxy-beta-L-talose + NAD(+) = dTDP-4-dehydro-beta-L-rhamnose + NADH + H(+). The protein operates within bacterial outer membrane biogenesis; LPS O-antigen biosynthesis. Catalyzes the reduction of dTDP-6-deoxy-L-lyxo-4-hexulose to dTDP-6-deoxy-L-talose. In Aggregatibacter actinomycetemcomitans (Actinobacillus actinomycetemcomitans), this protein is dTDP-6-deoxy-L-talose 4-dehydrogenase (NAD(+)) (tll).